The chain runs to 1669 residues: Collagen alpha-1(IV) chain (1669 aa).

The first 27 residues, 1-27 (MGPRLSVWLLLLPAALLLHEEHSRAAA), serve as a signal peptide directing secretion. A propeptide spans 28–172 (KGGCAGSGCG…LGHVPGMLLK (145 aa)) (N-terminal propeptide (7S domain)). Disordered stretches follow at residues 48 to 459 (KGER…EIGE), 504 to 1382 (GRDG…PKGQ), and 1404 to 1431 (PGQKGEMGPAGPTGPRGFPGPPGPDGLP). Residue N126 is glycosylated (N-linked (GlcNAc...) asparagine). Residues 173–1440 (GERGFPGIPG…PGSMGPPGTP (1268 aa)) form a triple-helical region region. Over residues 196-214 (VGPPGFTGPPGPPGPPGPP) the composition is skewed to pro residues. 3-hydroxyproline occurs at positions 204, 207, and 210. A compositionally biased stretch (low complexity) spans 234-249 (QGVSGPPGVPGQAQVQ). Composition is skewed to basic and acidic residues over residues 250-263 (EKGDFATKGEKGQK) and 289-298 (PGKDGDKGEK). 3 stretches are compositionally biased toward pro residues: residues 367–376 (PGQPGPPGLP), 413–424 (PGPPGSPGPPGQ), and 436–448 (PGPPGDQGPPGIP). Over residues 535 to 545 (FDLRLKGDKGD) the composition is skewed to basic and acidic residues. The segment covering 586–595 (GPPGGVGFPG) has biased composition (gly residues). A 3-hydroxyproline mark is found at P587 and P602. P603 is modified (4-hydroxyproline). P605 is modified (3-hydroxyproline). A 4-hydroxyproline modification is found at P606. Over residues 611–620 (AGPIGDKGQA) the composition is skewed to low complexity. Residues 621 to 630 (GFPGGPGSPG) are compositionally biased toward gly residues. 4-hydroxyproline occurs at positions 623, 626, 629, and 632. Position 647 is a 3-hydroxyproline (P647). A compositionally biased stretch (gly residues) spans 797 to 817 (GVPGIGPPGARGPPGGQGPPG). Low complexity-rich tracts occupy residues 856 to 875 (QSGLPGLPGQQGAPGIPGFP) and 977 to 986 (PGKDGQAGQP). Positions 1011 to 1020 (GSVGGMGLPG) are enriched in gly residues. Over residues 1086 to 1114 (SIGIPGMPGSPGLKGSPGSVGYPGSPGLP) the composition is skewed to low complexity. A 3-hydroxyproline modification is found at P1214. Over residues 1247–1258 (PGLPGPMGPPGL) the composition is skewed to pro residues. Positions 1290-1299 (GMPGIGGSPG) are enriched in gly residues. Over residues 1368–1382 (PGLKGLQGLPGPKGQ) the composition is skewed to low complexity. 3-hydroxyproline is present on P1424. The 225-residue stretch at 1445-1669 (GFLVTRHSQT…SRCQVCMRRT (225 aa)) folds into the Collagen IV NC1 domain. Intrachain disulfides connect C1460–C1551, C1493–C1548, C1505–C1511, C1570–C1665, C1604–C1662, and C1616–C1622. An S-Lysyl-methionine sulfilimine (Met-Lys) (interchain with K-1651) cross-link involves residue M1533. K1651 is covalently cross-linked (S-Lysyl-methionine sulfilimine (Lys-Met) (interchain with M-1533)).

Belongs to the type IV collagen family. As to quaternary structure, there are six type IV collagen isoforms, alpha 1(IV)-alpha 6(IV), each of which can form a triple helix structure with 2 other chains to generate type IV collagen network. Interacts with EFEMP2. In terms of processing, lysines at the third position of the tripeptide repeating unit (G-X-Y) are hydroxylated. The modified lysines can be O-glycosylated. Post-translationally, contains 4-hydroxyproline. Prolines at the third position of the tripeptide repeating unit (G-X-Y) are hydroxylated in some or all of the chains. Contains 3-hydroxyproline. This modification occurs on the first proline residue in the sequence motif Gly-Pro-Hyp, where Hyp is 4-hydroxyproline. In terms of processing, type IV collagens contain numerous cysteine residues which are involved in inter- and intramolecular disulfide bonding. 12 of these, located in the NC1 domain, are conserved in all known type IV collagens. Post-translationally, the trimeric structure of the NC1 domains is stabilized by covalent bonds (sulfilimine cross-links) between Lys and Met residues. These cross-links are important for the mechanical stability of the basement membrane. Sulfilimine cross-link is catalyzed by PXDN. Proteolytic processing produces the C-terminal NC1 peptide, arresten. In terms of tissue distribution, highly expressed in placenta.

The protein localises to the secreted. It is found in the extracellular space. It localises to the extracellular matrix. Its subcellular location is the basement membrane. Its function is as follows. Type IV collagen is the major structural component of glomerular basement membranes (GBM), forming a 'chicken-wire' meshwork together with laminins, proteoglycans and entactin/nidogen. In terms of biological role, arresten, comprising the C-terminal NC1 domain, inhibits angiogenesis and tumor formation. The C-terminal half is found to possess the anti-angiogenic activity. Specifically inhibits endothelial cell proliferation, migration and tube formation. In Homo sapiens (Human), this protein is Collagen alpha-1(IV) chain.